We begin with the raw amino-acid sequence, 210 residues long: Thymidylate kinase (210 aa).

Residue 11–18 coordinates ATP; sequence GLEGAGKS.

It belongs to the thymidylate kinase family.

The enzyme catalyses dTMP + ATP = dTDP + ADP. Phosphorylation of dTMP to form dTDP in both de novo and salvage pathways of dTTP synthesis. The sequence is that of Thymidylate kinase from Histophilus somni (strain 2336) (Haemophilus somnus).